Here is a 154-residue protein sequence, read N- to C-terminus: MAASRRLMKELEEIRKCGMKNFRNIRVDEANLLTWQGLIVPDNPPYDKGAFRIEINFPAEYPFKPPKITFKTKIYHPNIDEKGQVCLPVISAENWKPATKTDQVIQSLIALVNDPQPEHPLRADLAEEYSKDRKKFCKNAEEFTKKYGEKRPVD.

A UBC core domain is found at 2–149 (AASRRLMKEL…AEEFTKKYGE (148 aa)). Cys-86 (glycyl thioester intermediate) is an active-site residue. Position 131 is an N6-acetyllysine (Lys-131).

This sequence belongs to the ubiquitin-conjugating enzyme family. As to quaternary structure, interacts with PRKN; involved in ubiquitination and degradation of misfolded proteins. Interacts with UBE3A. Interacts with CCNB1IP1, CBL, ZAP70, RNF19A, RNF19B and RNF144B. Interacts with ARIH1. Interacts with ARIH2 (via RING-type 1). Interacts with NCOA1; they functionally interact to regulate progesterone receptor transcriptional activity. Interacts with NDFIP1 (via N-terminus); the interaction mediates recruitment of UBE2L3 to ITCH and causes MAP3K7 ubiquitination. Post-translationally, ubiquitinated. The alteration of UBE2L3 protein levels during the S-phase of the cell cycle is due to ubiquitin-dependent proteasomal degradation. Autoubiquitinated in vitro.

It localises to the nucleus. The protein localises to the cytoplasm. It catalyses the reaction S-ubiquitinyl-[E1 ubiquitin-activating enzyme]-L-cysteine + [E2 ubiquitin-conjugating enzyme]-L-cysteine = [E1 ubiquitin-activating enzyme]-L-cysteine + S-ubiquitinyl-[E2 ubiquitin-conjugating enzyme]-L-cysteine.. It participates in protein modification; protein ubiquitination. In terms of biological role, ubiquitin-conjugating enzyme E2 that specifically acts with HECT-type and RBR family E3 ubiquitin-protein ligases. Does not function with most RING-containing E3 ubiquitin-protein ligases because it lacks intrinsic E3-independent reactivity with lysine: in contrast, it has activity with the RBR family E3 enzymes, such as PRKN, RNF31 and ARIH1, that function like RING-HECT hybrids. Accepts ubiquitin from the E1 complex and catalyzes its covalent attachment to other proteins. Mediates ubiquitination by the CUL9-RBX1 complex. In vitro catalyzes 'Lys-11'-linked polyubiquitination. Involved in the selective degradation of short-lived and abnormal proteins. Down-regulated during the S-phase it is involved in progression through the cell cycle. Regulates nuclear hormone receptors transcriptional activity. May play a role in myelopoiesis. The chain is Ubiquitin-conjugating enzyme E2 L3 (UBE2L3) from Pongo abelii (Sumatran orangutan).